A 147-amino-acid chain; its full sequence is uncharacterized protein (147 aa).

The Extracellular segment spans residues 1-16 (MDHRAAFGYFSNACFK). The helical transmembrane segment at 17–37 (VMLFSSLLASFASSVAFISLI) threads the bilayer. The Cytoplasmic portion of the chain corresponds to 38-105 (TFSLSSSESP…FEAAFFLLTN (68 aa)). A helical transmembrane segment spans residues 106–126 (EMIFFILYYFFSCLMFFYVAS). The Extracellular portion of the chain corresponds to 127 to 147 (ERNTNPKILQTINTKPLYIKN).

Its subcellular location is the membrane. This is an uncharacterized protein from Saccharomyces cerevisiae (strain ATCC 204508 / S288c) (Baker's yeast).